The chain runs to 58 residues: UPF0391 membrane protein Shew185_1413 (58 aa).

2 helical membrane-spanning segments follow: residues 6 to 26 and 28 to 48; these read LVFLVVAVIAGLFGFTGIAGA and AGIAKIIFFLFIVLLVISLLI.

This sequence belongs to the UPF0391 family.

Its subcellular location is the cell membrane. This is UPF0391 membrane protein Shew185_1413 from Shewanella baltica (strain OS185).